Consider the following 293-residue polypeptide: Phosphoribosylaminoimidazole-succinocarboxamide synthase (293 aa).

This sequence belongs to the SAICAR synthetase family.

It catalyses the reaction 5-amino-1-(5-phospho-D-ribosyl)imidazole-4-carboxylate + L-aspartate + ATP = (2S)-2-[5-amino-1-(5-phospho-beta-D-ribosyl)imidazole-4-carboxamido]succinate + ADP + phosphate + 2 H(+). The protein operates within purine metabolism; IMP biosynthesis via de novo pathway; 5-amino-1-(5-phospho-D-ribosyl)imidazole-4-carboxamide from 5-amino-1-(5-phospho-D-ribosyl)imidazole-4-carboxylate: step 1/2. The polypeptide is Phosphoribosylaminoimidazole-succinocarboxamide synthase (Desulfosudis oleivorans (strain DSM 6200 / JCM 39069 / Hxd3) (Desulfococcus oleovorans)).